The sequence spans 343 residues: Geranylgeranyl pyrophosphate synthase 1 (343 aa).

Isopentenyl diphosphate contacts are provided by Lys43, Arg46, and His75. 2 residues coordinate Mg(2+): Asp82 and Asp86. Arg91 contacts dimethylallyl diphosphate. Arg92 lines the isopentenyl diphosphate pocket. 3 residues coordinate dimethylallyl diphosphate: Lys169, Thr170, and Gln212. Asp215 contributes to the Mg(2+) binding site. Dimethylallyl diphosphate-binding residues include Asn219, Lys229, and Lys239.

It belongs to the FPP/GGPP synthase family. It depends on Mg(2+) as a cofactor.

The enzyme catalyses isopentenyl diphosphate + dimethylallyl diphosphate = (2E)-geranyl diphosphate + diphosphate. The catalysed reaction is isopentenyl diphosphate + (2E)-geranyl diphosphate = (2E,6E)-farnesyl diphosphate + diphosphate. It catalyses the reaction isopentenyl diphosphate + (2E,6E)-farnesyl diphosphate = (2E,6E,10E)-geranylgeranyl diphosphate + diphosphate. Its function is as follows. Geranylgeranyl pyrophosphate synthase; part of the gene cluster 4 that mediates the biosynthesis of an isoprenoid secondary metabolite. The polypeptide is Geranylgeranyl pyrophosphate synthase 1 (GGS1) (Zymoseptoria tritici (strain CBS 115943 / IPO323) (Speckled leaf blotch fungus)).